The sequence spans 153 residues: Lipoprotein signal peptidase (153 aa).

A run of 2 helical transmembrane segments spans residues 61–81 (YFFV…LVKN) and 85–105 (SLWL…NFID). Active-site residues include Asp-114 and Asp-130. A helical transmembrane segment spans residues 125–145 (IFNVADSYLTVGVLLLILILW).

Belongs to the peptidase A8 family.

It is found in the cell membrane. It catalyses the reaction Release of signal peptides from bacterial membrane prolipoproteins. Hydrolyzes -Xaa-Yaa-Zaa-|-(S,diacylglyceryl)Cys-, in which Xaa is hydrophobic (preferably Leu), and Yaa (Ala or Ser) and Zaa (Gly or Ala) have small, neutral side chains.. It functions in the pathway protein modification; lipoprotein biosynthesis (signal peptide cleavage). Functionally, this protein specifically catalyzes the removal of signal peptides from prolipoproteins. The protein is Lipoprotein signal peptidase of Streptococcus thermophilus (strain CNRZ 1066).